The chain runs to 427 residues: N-acylglucosamine 2-epimerase (427 aa).

The interval 195–216 (LLNLVEQLGEADEELAGKYAEL) is leucine-zipper.

It belongs to the N-acylglucosamine 2-epimerase family. As to quaternary structure, homodimer. Forms a heterodimer with renin and inhibits its activity.

It catalyses the reaction an N-acyl-D-glucosamine = an N-acyl-D-mannosamine. Its pathway is amino-sugar metabolism; N-acetylneuraminate degradation. Its activity is regulated as follows. Inhibited by N-ethylmaleimide, 5,5'-dithiobis-2-nitrobenzoate and iodoacetic acid. Functionally, catalyzes the interconversion of N-acetylglucosamine to N-acetylmannosamine. Involved in the N-glycolylneuraminic acid (Neu5Gc) degradation pathway: although human is not able to catalyze formation of Neu5Gc due to the inactive CMAHP enzyme, Neu5Gc is present in food and must be degraded. This is N-acylglucosamine 2-epimerase (RENBP) from Homo sapiens (Human).